Here is a 750-residue protein sequence, read N- to C-terminus: Putative tyrosine-protein kinase EpsB (750 aa).

Topologically, residues 1–31 (MTQNLPQPPAVNAPENELDLVRYLDVLVANR) are cytoplasmic. The helical transmembrane segment at 32–52 (WLIAGIAAAVMLLGAAYAFLA) threads the bilayer. The Periplasmic segment spans residues 53-444 (RPVYEADIMV…VPEEPVKPKK (392 aa)). The helical transmembrane segment at 445–465 (LTVTPLAGVLGVVLGVMAAFV) threads the bilayer. Topologically, residues 466–750 (RNALFGGITD…NSKPPEAESA (285 aa)) are cytoplasmic.

Belongs to the etk/wzc family.

The protein localises to the cell inner membrane. The enzyme catalyses L-tyrosyl-[protein] + ATP = O-phospho-L-tyrosyl-[protein] + ADP + H(+). Its function is as follows. Probably involved in polymerization and/or export of exopolysaccharide EPS I which functions as a virulence factor. May be involved in an ATP-dependent process in the pathway for EPS I production, possibly export of the trimeric repeat units across the inner membrane or their polymerization. This chain is Putative tyrosine-protein kinase EpsB (epsB), found in Ralstonia solanacearum (Pseudomonas solanacearum).